Reading from the N-terminus, the 243-residue chain is Proteasome subunit alpha (243 aa).

This sequence belongs to the peptidase T1A family. The 20S proteasome core is composed of 14 alpha and 14 beta subunits that assemble into four stacked heptameric rings, resulting in a barrel-shaped structure. The two inner rings, each composed of seven catalytic beta subunits, are sandwiched by two outer rings, each composed of seven alpha subunits. The catalytic chamber with the active sites is on the inside of the barrel. Has a gated structure, the ends of the cylinder being occluded by the N-termini of the alpha-subunits. Is capped at one or both ends by the proteasome regulatory ATPase, PAN.

The protein localises to the cytoplasm. With respect to regulation, the formation of the proteasomal ATPase PAN-20S proteasome complex, via the docking of the C-termini of PAN into the intersubunit pockets in the alpha-rings, triggers opening of the gate for substrate entry. Interconversion between the open-gate and close-gate conformations leads to a dynamic regulation of the 20S proteasome proteolysis activity. Component of the proteasome core, a large protease complex with broad specificity involved in protein degradation. This chain is Proteasome subunit alpha, found in Pyrobaculum aerophilum (strain ATCC 51768 / DSM 7523 / JCM 9630 / CIP 104966 / NBRC 100827 / IM2).